We begin with the raw amino-acid sequence, 114 residues long: Type 4 adapter protein IcmS (114 aa).

In terms of assembly, the T4BSS is a complex nanomachine composed of several subcomplexes. This subunit is part of the Type IV Coupling Complex (T4CC), a subcomplex composed of the DotLMNYZ core and the IcmSW-LvgA adapter subunits, linked by the C-terminal tail of DotL. Interacts with IcmW. IcmS and IcmW form a stable complex. Interacts directly with the type 4 coupling protein DotL. Interacts with LvgA. Interacts with effector proteins.

It is found in the cytoplasm. Interaction with DotL is critical for the export of IcmSW-dependent substrates. In terms of biological role, component of the Dot/Icm type IVB secretion system (T4BSS), which is used to inject bacterial effector proteins into eukaryotic host cells. Part of a subcomplex which recruits effector proteins and delivers them to the core transmembrane subcomplex. The IcmS/IcmW protein complex plays an important role in protein translocation by interacting with multiple Dot/Icm effector proteins to facilitate their translocation into host cells. Interaction promotes conformational changes in the effector protein, which may facilitate display of a C-terminal translocation signal. May maintain the substrates in a translocation competent form. Required for intracellular growth in host cells, replicative phagosome formation and phagosome trafficking. IcmS is required for IcmW stability. This Legionella pneumophila subsp. pneumophila (strain Philadelphia 1 / ATCC 33152 / DSM 7513) protein is Type 4 adapter protein IcmS.